The chain runs to 114 residues: Probable non-functional T cell receptor beta variable 5-7 (114 aa).

Positions M1 to A21 are cleaved as a signal peptide. Residues G22–L114 enclose the Ig-like domain. A disulfide bridge connects residues C42 and C110. N90 carries an N-linked (GlcNAc...) asparagine glycan.

In terms of assembly, alpha-beta TR is a heterodimer composed of an alpha and beta chain; disulfide-linked. The alpha-beta TR is associated with the transmembrane signaling CD3 coreceptor proteins to form the TR-CD3 (TcR or TCR). The assembly of alpha-beta TR heterodimers with CD3 occurs in the endoplasmic reticulum where a single alpha-beta TR heterodimer associates with one CD3D-CD3E heterodimer, one CD3G-CD3E heterodimer and one CD247 homodimer forming a stable octameric structure. CD3D-CD3E and CD3G-CD3E heterodimers preferentially associate with TR alpha and TR beta chains, respectively. The association of the CD247 homodimer is the last step of TcR assembly in the endoplasmic reticulum and is required for transport to the cell surface.

The protein resides in the cell membrane. Its function is as follows. Probable non-functional open reading frame (ORF) of V region of the variable domain of T cell receptor (TR) beta chain. Non-functional ORF generally cannot participate in the synthesis of a productive T cell receptor (TR) chain due to altered V-(D)-J or switch recombination and/or splicing site (at mRNA level) and/or conserved amino acid change (protein level). Alpha-beta T cell receptors are antigen specific receptors which are essential to the immune response and are present on the cell surface of T lymphocytes. Recognize peptide-major histocompatibility (MH) (pMH) complexes that are displayed by antigen presenting cells (APC), a prerequisite for efficient T cell adaptive immunity against pathogens. Binding of alpha-beta TR to pMH complex initiates TR-CD3 clustering on the cell surface and intracellular activation of LCK that phosphorylates the ITAM motifs of CD3G, CD3D, CD3E and CD247 enabling the recruitment of ZAP70. In turn ZAP70 phosphorylates LAT, which recruits numerous signaling molecules to form the LAT signalosome. The LAT signalosome propagates signal branching to three major signaling pathways, the calcium, the mitogen-activated protein kinase (MAPK) kinase and the nuclear factor NF-kappa-B (NF-kB) pathways, leading to the mobilization of transcription factors that are critical for gene expression and essential for T cell growth and differentiation. The T cell repertoire is generated in the thymus, by V-(D)-J rearrangement. This repertoire is then shaped by intrathymic selection events to generate a peripheral T cell pool of self-MH restricted, non-autoaggressive T cells. Post-thymic interaction of alpha-beta TR with the pMH complexes shapes TR structural and functional avidity. This is Probable non-functional T cell receptor beta variable 5-7 from Homo sapiens (Human).